A 383-amino-acid polypeptide reads, in one-letter code: Erythronate-4-phosphate dehydrogenase (383 aa).

The substrate site is built by Ser45 and Thr66. NAD(+) contacts are provided by Asp146 and Thr175. Arg208 is an active-site residue. Asp232 contacts NAD(+). The active site involves Glu237. His254 serves as the catalytic Proton donor. Gly257 provides a ligand contact to NAD(+).

This sequence belongs to the D-isomer specific 2-hydroxyacid dehydrogenase family. PdxB subfamily. As to quaternary structure, homodimer.

Its subcellular location is the cytoplasm. It catalyses the reaction 4-phospho-D-erythronate + NAD(+) = (R)-3-hydroxy-2-oxo-4-phosphooxybutanoate + NADH + H(+). It participates in cofactor biosynthesis; pyridoxine 5'-phosphate biosynthesis; pyridoxine 5'-phosphate from D-erythrose 4-phosphate: step 2/5. Its function is as follows. Catalyzes the oxidation of erythronate-4-phosphate to 3-hydroxy-2-oxo-4-phosphonooxybutanoate. The sequence is that of Erythronate-4-phosphate dehydrogenase from Chromohalobacter salexigens (strain ATCC BAA-138 / DSM 3043 / CIP 106854 / NCIMB 13768 / 1H11).